The following is a 316-amino-acid chain: MSIKEQSLMTPYLQFDRSQWAALRDSVPMTLTEDEIAQLKGINEDLSLEEVAEIYLPLSRLLNFYISSNLRRQAVLEQFLGTNGQRIPYIISIAGSVAVGKSTTARVLQALLSRWPEHRRVELITTDGFLHPNQVLKERGLMKKKGFPESYDMHRLVKFVSDLKSGVPNVTAPVYSHLIYDVIPEGDKTVAQPDILILEGLNVLQSGMDYPHDPHHVLVSDFVDFSIYVDAPEELLQTWYINRFLKFREGAFTDPDSYFHNYAKLSKEEAVNTATSLWKEINWLNLKQNILPTRERASLIMTKSANHAVEQVRLRK.

95–102 is a binding site for ATP; the sequence is GSVAVGKS.

This sequence belongs to the prokaryotic pantothenate kinase family.

The protein localises to the cytoplasm. The enzyme catalyses (R)-pantothenate + ATP = (R)-4'-phosphopantothenate + ADP + H(+). The protein operates within cofactor biosynthesis; coenzyme A biosynthesis; CoA from (R)-pantothenate: step 1/5. In Salmonella gallinarum (strain 287/91 / NCTC 13346), this protein is Pantothenate kinase.